The following is a 213-amino-acid chain: Redox-sensing transcriptional repressor Rex (213 aa).

A DNA-binding region (H-T-H motif) is located at residues isoleucine 16–phenylalanine 55. Position 90-95 (glycine 90–glycine 95) interacts with NAD(+).

The protein belongs to the transcriptional regulatory Rex family. As to quaternary structure, homodimer.

The protein resides in the cytoplasm. In terms of biological role, modulates transcription in response to changes in cellular NADH/NAD(+) redox state. The chain is Redox-sensing transcriptional repressor Rex from Ligilactobacillus salivarius (strain UCC118) (Lactobacillus salivarius).